The following is a 160-amino-acid chain: SsrA-binding protein (160 aa).

The protein belongs to the SmpB family.

The protein resides in the cytoplasm. In terms of biological role, required for rescue of stalled ribosomes mediated by trans-translation. Binds to transfer-messenger RNA (tmRNA), required for stable association of tmRNA with ribosomes. tmRNA and SmpB together mimic tRNA shape, replacing the anticodon stem-loop with SmpB. tmRNA is encoded by the ssrA gene; the 2 termini fold to resemble tRNA(Ala) and it encodes a 'tag peptide', a short internal open reading frame. During trans-translation Ala-aminoacylated tmRNA acts like a tRNA, entering the A-site of stalled ribosomes, displacing the stalled mRNA. The ribosome then switches to translate the ORF on the tmRNA; the nascent peptide is terminated with the 'tag peptide' encoded by the tmRNA and targeted for degradation. The ribosome is freed to recommence translation, which seems to be the essential function of trans-translation. In Zymomonas mobilis subsp. mobilis (strain ATCC 31821 / ZM4 / CP4), this protein is SsrA-binding protein.